We begin with the raw amino-acid sequence, 561 residues long: MSPALAAGLQIAFVLAVLAIAYVPVGDYMARVYSSTRDLRVESVIYRVGRIDSRAEQTWYGYAASVLGFSLASALFLYFLQRIQGVLPLSDGLSGVSPAVAFNTAISFVANTNWQSYTPETTMSNFVQPVGLAVQNFVSAAVGMAVAIALVRGFIRVARGGEIGNFWVDLTRGSLRILLPFSFVIALILLSQGVIQSFHSGFASTGLDGNAVTNALAPVASQEAIKELGTNGGGILAANSAHPFENPTPLSNIVEILAILLIPVCLTRTFGTLVGDRRQGLTLLAVMGILWSGLLAVTLAAESGARGVAATAAGSMMEGKEVRFGIPGSALFAVATTGTSTGAVNSAHDSMSPLGGGAVLLNMLLGEIAPGGVGTGLYGILVLALIAVFVGGLLVGRTPEYLGKKLGRREITLAALSILVMPALVLIGTAITVILGSTTGYQGNGGDPGTPGSIHGFSEVLYAFASASNNNGSAFGGLTVTSDWFQSSLGICMLLGRFLPIIFVLALAGALASQKKVAPTAGTLPTSGPMFTGLLTGTVVLVAALTFFPALALGPLAEALQ.

12 helical membrane passes run leucine 5–valine 25, tyrosine 60–leucine 80, valine 86–isoleucine 106, valine 130–leucine 150, isoleucine 177–serine 197, proline 247–threonine 267, leucine 281–alanine 301, phenylalanine 324–valine 344, glycine 376–glycine 396, alanine 415–leucine 435, isoleucine 491–leucine 511, and glycine 533–leucine 553.

The protein belongs to the KdpA family. The system is composed of three essential subunits: KdpA, KdpB and KdpC.

It localises to the cell membrane. In terms of biological role, part of the high-affinity ATP-driven potassium transport (or Kdp) system, which catalyzes the hydrolysis of ATP coupled with the electrogenic transport of potassium into the cytoplasm. This subunit binds the extracellular potassium ions and delivers the ions to the membrane domain of KdpB through an intramembrane tunnel. The chain is Potassium-transporting ATPase potassium-binding subunit from Rhodococcus erythropolis (strain PR4 / NBRC 100887).